We begin with the raw amino-acid sequence, 366 residues long: Alanine racemase (366 aa).

Lys40 serves as the catalytic Proton acceptor; specific for D-alanine. Lys40 is modified (N6-(pyridoxal phosphate)lysine). Arg136 contacts substrate. Tyr263 functions as the Proton acceptor; specific for L-alanine in the catalytic mechanism. A substrate-binding site is contributed by Met310.

It belongs to the alanine racemase family. Pyridoxal 5'-phosphate is required as a cofactor.

The catalysed reaction is L-alanine = D-alanine. The protein operates within amino-acid biosynthesis; D-alanine biosynthesis; D-alanine from L-alanine: step 1/1. In terms of biological role, catalyzes the interconversion of L-alanine and D-alanine. May also act on other amino acids. The polypeptide is Alanine racemase (alr) (Streptococcus pyogenes serotype M2 (strain MGAS10270)).